Consider the following 144-residue polypeptide: uncharacterized protein (144 aa).

The first 23 residues, Met-1 to Tyr-23, serve as a signal peptide directing secretion.

This is an uncharacterized protein from Archaeoglobus fulgidus (strain ATCC 49558 / DSM 4304 / JCM 9628 / NBRC 100126 / VC-16).